The primary structure comprises 575 residues: Developmental and secondary metabolism regulator VEL1 (575 aa).

Positions 21-225 constitute a Velvet domain; that stretch reads GRKLKYTLTV…AEQGCRVRIR (205 aa). The short motif at 35 to 40 is the Nuclear localization signal element; that stretch reads ERARAC. 2 disordered regions span residues 36 to 56 and 227 to 402; these read RARACGSGAKSSADRRPVDPP and DVRM…QSYE. A compositionally biased stretch (basic and acidic residues) spans 274–284; that stretch reads VHEDPQQRRGS. A compositionally biased stretch (polar residues) spans 294–308; sequence VVNTPFRTPSISPST. Residues 334 to 346 are compositionally biased toward pro residues; it reads IQPPHPPPPPPSS. Polar residues-rich tracts occupy residues 355–365 and 385–402; these read HHNQGPSTQFR and SYSQFRPPTNPSQQQSYE. The interval 465–509 is PEST; sequence AEQPLAMSPLASVTSISRGTQNSAPMPSHNYNKLERSGSYSQYAP. The interval 513–549 is disordered; the sequence is EAPKSTNKRSFNDVFSTPTESLSNGRRPSAIGIDIEE. Residues 516-538 are compositionally biased toward polar residues; that stretch reads KSTNKRSFNDVFSTPTESLSNGR.

The protein belongs to the velvet family. VeA subfamily. Component of the heterotrimeric velvet complex composed of LAE1, VEL1 and VEL2; VEL1 acting as a bridging protein between LAE1 and VEL2.

Its subcellular location is the nucleus. The protein localises to the cytoplasm. Functionally, component of the velvet transcription factor complex that controls sexual/asexual developmental ratio in response to light, promoting sexual development in the darkness while stimulating asexual sporulation under illumination. The velvet complex hat acts as a global regulator for secondary metabolite gene expression. Controls the expression of the oxalic acid and melanin gene clusters. Also controls the expression of proteases and carbohydrate-active enzymes. Involved in the resistance to oxidative stress. Required for full virulence. The polypeptide is Developmental and secondary metabolism regulator VEL1 (Botryotinia fuckeliana (strain B05.10) (Noble rot fungus)).